The chain runs to 649 residues: PTS system mannitol-specific EIICBA component (649 aa).

The PTS EIIC type-2 domain maps to 13–342; that stretch reads FGRFLSNMVM…LLMKAQTSTE (330 aa). The next 6 membrane-spanning stretches (helical) occupy residues 25-46, 51-71, 135-156, 166-186, 274-293, and 314-335; these read IGAFIAWGFITALFIPTGWVPN, SLVGPMITYLLPLLIGYTGGK, SAGIIGMLCAIIAFFLIGPFVK, VNFLVTAHLLPLTSIFVEPAK, AIAGGMTGVFTLTVFNAGLV, and LGVVCSIFAAAAVSFTVAALLM. Positions 384 to 475 constitute a PTS EIIB type-2 domain; the sequence is QSIIVACDAG…LVTQLLAAKR (92 aa). Catalysis depends on Cys-390, which acts as the Phosphocysteine intermediate; for EIIB activity. Position 390 is a phosphocysteine; by EIIA (Cys-390). Residues 504–646 enclose the PTS EIIA type-2 domain; the sequence is FQLQKENIHL…SDVLSILATS (143 aa). Catalysis depends on His-564, which acts as the Tele-phosphohistidine intermediate; for EIIA activity. Phosphohistidine; by HPr is present on His-564.

As to quaternary structure, homodimer. In terms of processing, an intramolecular phosphotransfer takes places between His-564 and Cys-390.

The protein localises to the cell inner membrane. It catalyses the reaction D-mannitol(out) + N(pros)-phospho-L-histidyl-[protein] = D-mannitol 1-phosphate(in) + L-histidyl-[protein]. In terms of biological role, the phosphoenolpyruvate-dependent sugar phosphotransferase system (sugar PTS), a major carbohydrate active transport system, catalyzes the phosphorylation of incoming sugar substrates concomitantly with their translocation across the cell membrane. This system is involved in D-mannitol transport. This chain is PTS system mannitol-specific EIICBA component (mtlA), found in Vibrio cholerae serotype O1 (strain ATCC 39315 / El Tor Inaba N16961).